Consider the following 265-residue polypeptide: 3-methyl-2-oxobutanoate hydroxymethyltransferase (265 aa).

Mg(2+) is bound by residues D44 and D83. Residues 44 to 45, D83, and K113 each bind 3-methyl-2-oxobutanoate; that span reads DS. E115 serves as a coordination point for Mg(2+). Residue E183 is the Proton acceptor of the active site.

This sequence belongs to the PanB family. Homodecamer; pentamer of dimers. It depends on Mg(2+) as a cofactor.

It localises to the cytoplasm. It carries out the reaction 3-methyl-2-oxobutanoate + (6R)-5,10-methylene-5,6,7,8-tetrahydrofolate + H2O = 2-dehydropantoate + (6S)-5,6,7,8-tetrahydrofolate. The protein operates within cofactor biosynthesis; (R)-pantothenate biosynthesis; (R)-pantoate from 3-methyl-2-oxobutanoate: step 1/2. Functionally, catalyzes the reversible reaction in which hydroxymethyl group from 5,10-methylenetetrahydrofolate is transferred onto alpha-ketoisovalerate to form ketopantoate. The sequence is that of 3-methyl-2-oxobutanoate hydroxymethyltransferase from Leptospira interrogans serogroup Icterohaemorrhagiae serovar copenhageni (strain Fiocruz L1-130).